The sequence spans 694 residues: Methionine--tRNA ligase (694 aa).

The short motif at 12-22 (PYANGPLHLGH) is the 'HIGH' region element. Residues Cys-143, Cys-146, Cys-156, and Cys-159 each coordinate Zn(2+). Residues 330–334 (KMSKS) carry the 'KMSKS' region motif. Lys-333 lines the ATP pocket. The interval 550-577 (LAAPATPATASKPAPAKADAKPAAAANP) is disordered. The segment covering 551–575 (AAPATPATASKPAPAKADAKPAAAA) has biased composition (low complexity). Positions 591 to 694 (DFAKLDLRIG…SGAQPGMPVR (104 aa)) constitute a tRNA-binding domain.

The protein belongs to the class-I aminoacyl-tRNA synthetase family. MetG type 1 subfamily. Homodimer. Zn(2+) serves as cofactor.

Its subcellular location is the cytoplasm. The enzyme catalyses tRNA(Met) + L-methionine + ATP = L-methionyl-tRNA(Met) + AMP + diphosphate. Its function is as follows. Is required not only for elongation of protein synthesis but also for the initiation of all mRNA translation through initiator tRNA(fMet) aminoacylation. This is Methionine--tRNA ligase from Xanthomonas axonopodis pv. citri (strain 306).